The sequence spans 539 residues: 3-hydroxy-3-methylglutaryl-coenzyme A reductase 1 (539 aa).

A helical membrane pass occupies residues 63-83 (FATVVCQLASVVYLLSLFAHP). The interval 84 to 124 (DAPATTTGDDDDGQGGSRRARPAAAEPAPMHGHGGGMMEAD) is linker. A disordered region spans residues 87 to 116 (ATTTGDDDDGQGGSRRARPAAAEPAPMHGH). A compositionally biased stretch (low complexity) spans 105–114 (PAAAEPAPMH). The catalytic stretch occupies residues 125–539 (DEEIVAAVAS…SSKDVAKAAS (415 aa)). Glu218 serves as the catalytic Charge relay system. N-linked (GlcNAc...) asparagine glycosylation is present at Asn282. Active-site charge relay system residues include Lys350 and Asp426. Residues 496 to 516 (LATIVAGSVLAGELSLLAALA) form a helical membrane-spanning segment. His524 functions as the Proton donor in the catalytic mechanism. Residue Asn528 is glycosylated (N-linked (GlcNAc...) asparagine).

Belongs to the HMG-CoA reductase family.

Its subcellular location is the endoplasmic reticulum membrane. It carries out the reaction (R)-mevalonate + 2 NADP(+) + CoA = (3S)-3-hydroxy-3-methylglutaryl-CoA + 2 NADPH + 2 H(+). It participates in metabolic intermediate biosynthesis; (R)-mevalonate biosynthesis; (R)-mevalonate from acetyl-CoA: step 3/3. Functionally, catalyzes the synthesis of mevalonate. The specific precursor of all isoprenoid compounds present in plants. This Oryza sativa subsp. indica (Rice) protein is 3-hydroxy-3-methylglutaryl-coenzyme A reductase 1 (HMG1).